Here is a 414-residue protein sequence, read N- to C-terminus: 3-oxoacyl-[acyl-carrier-protein] synthase 2 (414 aa).

In terms of domain architecture, Ketosynthase family 3 (KS3) spans 3–411 (KRRVVITGLG…GTNGTLVLSR (409 aa)). Residues cysteine 164, histidine 304, and histidine 341 each act as for beta-ketoacyl synthase activity in the active site.

It belongs to the thiolase-like superfamily. Beta-ketoacyl-ACP synthases family. In terms of assembly, homodimer.

It carries out the reaction a fatty acyl-[ACP] + malonyl-[ACP] + H(+) = a 3-oxoacyl-[ACP] + holo-[ACP] + CO2. The enzyme catalyses (9Z)-hexadecenoyl-[ACP] + malonyl-[ACP] + H(+) = 3-oxo-(11Z)-octadecenoyl-[ACP] + holo-[ACP] + CO2. Its pathway is lipid metabolism; fatty acid biosynthesis. Functionally, involved in the type II fatty acid elongation cycle. Catalyzes the elongation of a wide range of acyl-ACP by the addition of two carbons from malonyl-ACP to an acyl acceptor. Can efficiently catalyze the conversion of palmitoleoyl-ACP (cis-hexadec-9-enoyl-ACP) to cis-vaccenoyl-ACP (cis-octadec-11-enoyl-ACP), an essential step in the thermal regulation of fatty acid composition. This Coxiella burnetii (strain RSA 493 / Nine Mile phase I) protein is 3-oxoacyl-[acyl-carrier-protein] synthase 2 (fabF).